The primary structure comprises 652 residues: Spermatogenesis-associated protein 13 (652 aa).

The tract at residues 1-24 is disordered; it reads MTSASPEDQNAPVGCPKGARRRRP. Ser78 carries the phosphoserine modification. Positions 81–108 are disordered; it reads IGLDRVGRRRQMRASNVSSDGGTEPSAL. The ABR (APC-binding region) domain stretch occupies residues 98 to 150; the sequence is SSDGGTEPSALVDDNGSEEDFSYEDLCQASPRYLQPGGEQLAINELISDGNVV. At Ser114 the chain carries Phosphoserine. One can recognise an SH3 domain in the interval 147-206; sequence GNVVCAEALWDHVTMDDQELGFKAGDVIQVLEASNKDWWWGRSEDKEAWFPASFVRLRVN. The interval 209-235 is disordered; it reads ELSENSSSTPSEEQDEEASQSRHRHCE. The region spanning 240–424 is the DH domain; the sequence is MRTNVIREIM…KNVACLINER (185 aa). The PH domain occupies 455–561; sequence ELIHSGELTK…WLQACADERR (107 aa). The segment at 561–652 is C-terminal tail; the sequence is RRVQEDKEMG…TFNRLTPFRK (92 aa).

In terms of assembly, interacts (via ABR and SH3 domain) with APC. The binding of APC enhances its GEF activity by relieving it from an autoinhibitory conformation, in which the ABR and SH3 domains are associated with the C-terminal tail. Interacts (via C-terminal tail) with PPP1R9B (via C-terminus). Interacts with RAC1. Expressed at high levels in the placenta, spleen and kidney, at moderate levels in lung, small intestine, liver, brain and heart, and at low levels in skeletal muscle. Expression is aberrantly enhanced in most colorectal tumors.

It is found in the cytoplasm. Its subcellular location is the cell projection. The protein localises to the filopodium. It localises to the lamellipodium. The protein resides in the ruffle membrane. It is found in the podosome. Both the ABR and the SH3 domains contribute to maintaining the protein in an inhibited conformation by associating with the C-terminal tail. Binding of these domains to the C-terminal tail inhibits the activity of the protein by blocking a region that is required for its GEF activity. Functionally, acts as a guanine nucleotide exchange factor (GEF) for RHOA, RAC1 and CDC42 GTPases. Regulates cell migration and adhesion assembly and disassembly through a RAC1, PI3K, RHOA and AKT1-dependent mechanism. Increases both RAC1 and CDC42 activity, but decreases the amount of active RHOA. Required for MMP9 up-regulation via the JNK signaling pathway in colorectal tumor cells. Involved in tumor angiogenesis and may play a role in intestinal adenoma formation and tumor progression. In Homo sapiens (Human), this protein is Spermatogenesis-associated protein 13.